The sequence spans 324 residues: N-acetyl-gamma-glutamyl-phosphate reductase (324 aa).

Residue Cys131 is part of the active site.

This sequence belongs to the NAGSA dehydrogenase family. Type 1 subfamily.

It localises to the cytoplasm. The enzyme catalyses N-acetyl-L-glutamate 5-semialdehyde + phosphate + NADP(+) = N-acetyl-L-glutamyl 5-phosphate + NADPH + H(+). It participates in amino-acid biosynthesis; L-arginine biosynthesis; N(2)-acetyl-L-ornithine from L-glutamate: step 3/4. Its function is as follows. Catalyzes the NADPH-dependent reduction of N-acetyl-5-glutamyl phosphate to yield N-acetyl-L-glutamate 5-semialdehyde. The protein is N-acetyl-gamma-glutamyl-phosphate reductase of Bradyrhizobium sp. (strain BTAi1 / ATCC BAA-1182).